The primary structure comprises 207 residues: LexA repressor (207 aa).

The segment at residues 28–48 is a DNA-binding region (H-T-H motif); it reads VREIAVAVGLASSSTVHGHLE. Catalysis depends on for autocatalytic cleavage activity residues Ser-129 and Lys-167.

Belongs to the peptidase S24 family. In terms of assembly, homodimer.

It carries out the reaction Hydrolysis of Ala-|-Gly bond in repressor LexA.. Functionally, represses a number of genes involved in the response to DNA damage (SOS response), including recA and lexA. In the presence of single-stranded DNA, RecA interacts with LexA causing an autocatalytic cleavage which disrupts the DNA-binding part of LexA, leading to derepression of the SOS regulon and eventually DNA repair. The polypeptide is LexA repressor (Oceanobacillus iheyensis (strain DSM 14371 / CIP 107618 / JCM 11309 / KCTC 3954 / HTE831)).